The primary structure comprises 132 residues: Phycocyanin PC645 alpha-1 subunit (132 aa).

2 residues coordinate (2R,3E)-phycocyanobilin: D54 and R68. Mesobiliverdin is bound by residues C70, Q76, Y77, and K92. The 15,16-dihydrobiliverdin site is built by P123 and I125.

The protein belongs to the phycoerythrin family. As to quaternary structure, heterotetramer of 2 different alpha chains and 2 identical beta chains which form 2 alpha-beta heterodimers within the heterotetramer. Contains two phycocyanobilin chromophores, one mesobiliverdin chromophore and one 15,16-dihydrobiliverdin chromophore with binding mediated by both the alpha and beta subunits.

Its subcellular location is the plastid. It localises to the chloroplast thylakoid membrane. Light-harvesting photosynthetic tetrapyrrole chromophore-protein from the phycobiliprotein complex. The chain is Phycocyanin PC645 alpha-1 subunit from Chroomonas sp. (strain CCMP270).